The chain runs to 213 residues: Cell division protein SepF 2 (213 aa).

The interval 16-63 (EDDGYDGRGFDPDDDFEPELDPEPERDRRRHEPPHQSHQALHPQRDES) is disordered. The span at 27–39 (PDDDFEPELDPEP) shows a compositional bias: acidic residues.

The protein belongs to the SepF family. Homodimer. Interacts with FtsZ.

It is found in the cytoplasm. Its function is as follows. Cell division protein that is part of the divisome complex and is recruited early to the Z-ring. Probably stimulates Z-ring formation, perhaps through the cross-linking of FtsZ protofilaments. Its function overlaps with FtsA. This chain is Cell division protein SepF 2, found in Streptomyces avermitilis (strain ATCC 31267 / DSM 46492 / JCM 5070 / NBRC 14893 / NCIMB 12804 / NRRL 8165 / MA-4680).